The chain runs to 99 residues: Class II hydrophobin 3 (99 aa).

A signal peptide spans 1–18 (MRIDILATAALLAQLASA). Disulfide bonds link Cys31-Cys79, Cys40-Cys70, and Cys41-Cys53.

The protein belongs to the cerato-ulmin hydrophobin family. In terms of assembly, homodimer. Homodimers further self-assemble to form highly ordered films at water-air interfaces through intermolecular interactions.

It is found in the secreted. Its subcellular location is the cell wall. In terms of biological role, aerial growth, conidiation, and dispersal of filamentous fungi in the environment rely upon a capability of their secreting small amphipathic proteins called hydrophobins (HPBs) with low sequence identity. Class I can self-assemble into an outermost layer of rodlet bundles on aerial cell surfaces, conferring cellular hydrophobicity that supports fungal growth, development and dispersal; whereas Class II form highly ordered films at water-air interfaces through intermolecular interactions but contribute nothing to the rodlet structure. Hyd3 is a class II hydrophobin required for barley root colonization. Hyd1 and Hyd3 are jointly required for conidial hydrophobicity and dispersal, but seem not to be involved in mycelia hydrophobicity. Inhibits conidial germination in environments not suitable for mycelial growth. Plays probably a role in intraspecific signaling or hyphal fusion. The polypeptide is Class II hydrophobin 3 (Bionectria ochroleuca (Gliocladium roseum)).